The following is a 401-amino-acid chain: S-adenosylmethionine synthase (401 aa).

ATP is bound at residue 136–141 (GQGSVD).

It belongs to the AdoMet synthase 2 family. The cofactor is Mg(2+).

It catalyses the reaction L-methionine + ATP + H2O = S-adenosyl-L-methionine + phosphate + diphosphate. It participates in amino-acid biosynthesis; S-adenosyl-L-methionine biosynthesis; S-adenosyl-L-methionine from L-methionine: step 1/1. Functionally, catalyzes the formation of S-adenosylmethionine from methionine and ATP. In Pyrococcus furiosus (strain ATCC 43587 / DSM 3638 / JCM 8422 / Vc1), this protein is S-adenosylmethionine synthase.